The primary structure comprises 50 residues: Large ribosomal subunit protein bL33 (50 aa).

Belongs to the bacterial ribosomal protein bL33 family.

This Mycoplasmopsis synoviae (strain 53) (Mycoplasma synoviae) protein is Large ribosomal subunit protein bL33.